We begin with the raw amino-acid sequence, 201 residues long: MALHDENVVWHAHAVTREDREALHGHKGAVVWFTGLSGSGKSTIAGALEEALHKLGISTWLLDGDNVRHGLCSDLGFSDADRKENIRRVGEVANLMVDAGLVVLTAFISPHRAERQMVRERIGEGRFIEVFVDTPLATCEARDPKGLYKKARAGELRNFTGIDSVYETPESPEVHLDGEQLVTNLVAQLLDLLRQGDIIRS.

35–42 provides a ligand contact to ATP; it reads GLSGSGKS. The Phosphoserine intermediate role is filled by S109.

This sequence belongs to the APS kinase family.

The catalysed reaction is adenosine 5'-phosphosulfate + ATP = 3'-phosphoadenylyl sulfate + ADP + H(+). It participates in sulfur metabolism; hydrogen sulfide biosynthesis; sulfite from sulfate: step 2/3. In terms of biological role, catalyzes the synthesis of activated sulfate. The sequence is that of Adenylyl-sulfate kinase from Citrobacter koseri (strain ATCC BAA-895 / CDC 4225-83 / SGSC4696).